Reading from the N-terminus, the 310-residue chain is Adenylyl-sulfate kinase 4, chloroplastic (310 aa).

Residues 1–75 constitute a chloroplast transit peptide; the sequence is MDVAAMARCV…MAKDESISSR (75 aa). ATP is bound at residue 116–124; the sequence is GLSGSGKSS. Substrate-binding positions include D146, R149, R163, N166, 189–190, and G239; that span reads IS. The Phosphoserine intermediate role is filled by S190.

It belongs to the APS kinase family. Homodimer; disulfide-linked. In terms of tissue distribution, expressed in root vasculature, root tips, leaf epidermal and guard cells, pollen grains and radicle of immature seeds.

It localises to the plastid. Its subcellular location is the chloroplast. It catalyses the reaction adenosine 5'-phosphosulfate + ATP = 3'-phosphoadenylyl sulfate + ADP + H(+). The protein operates within sulfur metabolism; hydrogen sulfide biosynthesis; sulfite from sulfate: step 2/3. Its function is as follows. Catalyzes the phosphorylation of adenosine 5'-phosphosulfate to 3'-phosphoadenylyl sulfate, which is the activated sulfate form for sulfation reactions. Essential for plant reproduction and viability. The sequence is that of Adenylyl-sulfate kinase 4, chloroplastic (APK4) from Arabidopsis thaliana (Mouse-ear cress).